A 151-amino-acid polypeptide reads, in one-letter code: Ubiquitin-like protein 4A-B (151 aa).

The Ubiquitin-like domain occupies 1 to 76 (MILTIKPLQG…LNLVVRPAGE (76 aa)).

As to quaternary structure, component of the BAT3 complex.

It localises to the cytoplasm. Its subcellular location is the cytosol. Its function is as follows. Component of the BAT3 complex, a multiprotein complex involved in the post-translational delivery of tail-anchored (TA) membrane proteins to the endoplasmic reticulum membrane. TA membrane proteins, also named type II transmembrane proteins, contain a single C-terminal transmembrane region. This chain is Ubiquitin-like protein 4A-B (ubl4ab), found in Salmo salar (Atlantic salmon).